The following is a 378-amino-acid chain: Schlafen family member 2 (378 aa).

Belongs to the Schlafen family. In terms of tissue distribution, mainly expressed in the thymus, lymph node and spleen.

The protein resides in the cytoplasm. Its function is as follows. tRNA-binding protein involved in T-cell mediated immunity. Plays a key role during the metabolic reprograming phase of activated T-cell, when T-cells produce reactive oxygen species (ROS): acts by binding tRNAs and protecting them from cleavage by the oxidative stress-activated ribonuclease angiogenin (ANG). Also required for T-cell quiescence maintenance. The chain is Schlafen family member 2 from Mus musculus (Mouse).